The sequence spans 364 residues: Fructose-1,6-bisphosphatase class 1 1 (364 aa).

Glu-99, Asp-121, Leu-123, and Asp-124 together coordinate Mg(2+). Residues 124–127 (DGSS) and Asn-220 contribute to the substrate site. Glu-292 is a Mg(2+) binding site.

Belongs to the FBPase class 1 family. In terms of assembly, homotetramer. Requires Mg(2+) as cofactor.

Its subcellular location is the cytoplasm. The catalysed reaction is beta-D-fructose 1,6-bisphosphate + H2O = beta-D-fructose 6-phosphate + phosphate. It participates in carbohydrate biosynthesis; gluconeogenesis. The polypeptide is Fructose-1,6-bisphosphatase class 1 1 (Albidiferax ferrireducens (strain ATCC BAA-621 / DSM 15236 / T118) (Rhodoferax ferrireducens)).